The sequence spans 384 residues: Lipid-A-disaccharide synthase (384 aa).

Belongs to the LpxB family.

The enzyme catalyses a lipid X + a UDP-2-N,3-O-bis[(3R)-3-hydroxyacyl]-alpha-D-glucosamine = a lipid A disaccharide + UDP + H(+). It functions in the pathway bacterial outer membrane biogenesis; LPS lipid A biosynthesis. Functionally, condensation of UDP-2,3-diacylglucosamine and 2,3-diacylglucosamine-1-phosphate to form lipid A disaccharide, a precursor of lipid A, a phosphorylated glycolipid that anchors the lipopolysaccharide to the outer membrane of the cell. This is Lipid-A-disaccharide synthase from Cellvibrio japonicus (strain Ueda107) (Pseudomonas fluorescens subsp. cellulosa).